Consider the following 294-residue polypeptide: Energy-coupling factor transporter ATP-binding protein EcfA1 (294 aa).

Residues 27-260 (IEFENVYFAY…EERLLKMQLD (234 aa)) enclose the ABC transporter domain. 60 to 67 (GHNGSGKS) lines the ATP pocket.

It belongs to the ABC transporter superfamily. Energy-coupling factor EcfA family. In terms of assembly, forms a stable energy-coupling factor (ECF) transporter complex composed of 2 membrane-embedded substrate-binding proteins (S component), 2 ATP-binding proteins (A component) and 2 transmembrane proteins (T component).

It localises to the cell membrane. ATP-binding (A) component of a common energy-coupling factor (ECF) ABC-transporter complex. Unlike classic ABC transporters this ECF transporter provides the energy necessary to transport a number of different substrates. The chain is Energy-coupling factor transporter ATP-binding protein EcfA1 from Ureaplasma parvum serovar 3 (strain ATCC 700970).